The following is a 181-amino-acid chain: Adenine phosphoribosyltransferase (181 aa).

Belongs to the purine/pyrimidine phosphoribosyltransferase family. Homodimer.

It is found in the cytoplasm. The catalysed reaction is AMP + diphosphate = 5-phospho-alpha-D-ribose 1-diphosphate + adenine. It functions in the pathway purine metabolism; AMP biosynthesis via salvage pathway; AMP from adenine: step 1/1. Its function is as follows. Catalyzes a salvage reaction resulting in the formation of AMP, that is energically less costly than de novo synthesis. The chain is Adenine phosphoribosyltransferase from Shewanella woodyi (strain ATCC 51908 / MS32).